A 497-amino-acid chain; its full sequence is MDKKKNSFPDNLPEGTISELMQKQNNVQPSVIVIGSGISGLAAARNLSEASFKVTVLESRDRIGGRIHTDYSFGCPVDMGASWLHGVSDENPLAPIIRRLGLTLYRTSGDDSILYDHDLESYGLFDMHGNKIPPQLVTKVGDAFKRILEETEKIRDETANDMSVLQGISIVLDRNPELRQEGMAYEVLQWYLCRMEAWFAVDANLISLKCWDQDECLSGGHGLMVQGYEPVIRTIAKDLDIRLNHRVTKVVRTSNNKVIVAVEGGTNFVADAVIITVPIGVLKANLIQFEPELPQWKTSAISGLGVGNENKIALRFDRAFWPNVEFLGMVAPTSYACGYFLNLHKATGHPVLVYMAAGNLAQDLEKLSDEATANFVMLQLKKMFPDAPDPAQYLVTRWGTDPNTLGCYAYDVVGMPEDLYPRLGEPVDNIFFGGEAVNVEHQGSAHGAFLAGVSASQNCQRYIFERLGAWEKLKLVSLMGNSDILETATVPLQISRM.

Positions 58, 66, 247, and 435 each coordinate FAD. The Microbody targeting signal motif lies at 495-497 (SRM).

This sequence belongs to the flavin monoamine oxidase family. FAD serves as cofactor. As to expression, highly expressed in roots, flowers and greening cotelydons. Lower expression in other tissues.

It is found in the peroxisome. The catalysed reaction is spermine + O2 + H2O = 3-aminopropanal + spermidine + H2O2. It carries out the reaction spermidine + O2 + H2O = 3-aminopropanal + putrescine + H2O2. Its pathway is amine and polyamine degradation; spermine degradation. It participates in amine and polyamine degradation; spermidine degradation. Flavoenzyme involved in polyamine back-conversion. Catalyzes the oxidation of the secondary amino group of polyamines, such as spermine and spermidine. Substrate preference is spermine &gt; spermidine. No activity detected when putrescine or N(1)-acetylspermine are used as substrates. Plays an important role in the regulation of polyamine intracellular concentration. The protein is Probable polyamine oxidase 4 (PAO4) of Arabidopsis thaliana (Mouse-ear cress).